Here is a 176-residue protein sequence, read N- to C-terminus: Ubiquinol-cytochrome c reductase iron-sulfur subunit (176 aa).

Residues 15–36 (FLFVATGAAAAVGGAAALWPFI) form a helical membrane-spanning segment. Residues 87-174 (ARAVNVASLP…YQFVSDTKIQ (88 aa)) form the Rieske domain. Residues cysteine 119, histidine 121, cysteine 138, and histidine 141 each contribute to the [2Fe-2S] cluster site. Cysteine 124 and cysteine 140 are joined by a disulfide.

The protein belongs to the Rieske iron-sulfur protein family. The main subunits of complex b-c1 are: cytochrome b, cytochrome c1 and the Rieske protein. Requires [2Fe-2S] cluster as cofactor.

The protein localises to the cell membrane. It carries out the reaction a quinol + 2 Fe(III)-[cytochrome c](out) = a quinone + 2 Fe(II)-[cytochrome c](out) + 2 H(+)(out). Its function is as follows. Component of the ubiquinol-cytochrome c reductase complex (complex III or cytochrome b-c1 complex), which is a respiratory chain that generates an electrochemical potential coupled to ATP synthesis. The protein is Ubiquinol-cytochrome c reductase iron-sulfur subunit (petA) of Bradyrhizobium diazoefficiens (strain JCM 10833 / BCRC 13528 / IAM 13628 / NBRC 14792 / USDA 110).